Reading from the N-terminus, the 59-residue chain is Large ribosomal subunit protein bL32 (59 aa).

The disordered stretch occupies residues 1-20 (MAVQKNKPTRSKRGMRRSHD). Positions 7 to 19 (KPTRSKRGMRRSH) are enriched in basic residues.

Belongs to the bacterial ribosomal protein bL32 family.

The protein is Large ribosomal subunit protein bL32 of Wigglesworthia glossinidia brevipalpis.